The following is a 555-amino-acid chain: AP2-like ethylene-responsive transcription factor ANT (555 aa).

Disordered stretches follow at residues 34–56 (GGRE…SVPP) and 199–231 (LSMS…NHQQ). Low complexity-rich tracts occupy residues 41-53 (SSST…SSSS), 199-208 (LSMSPGSQSS), and 218-231 (QNQN…NHQQ). 2 consecutive DNA-binding regions (AP2/ERF) follow at residues 283–349 (QYRG…TNFS) and 385–443 (IYRG…TNFD).

This sequence belongs to the AP2/ERF transcription factor family. AP2 subfamily. In terms of assembly, interacts with ANL2, HDG2 and HDG10, and possibly with GL2, HDG3, HDG8, ATML1 and PDF2. Mostly expressed in developing flowers. Also present in mature flowers, siliques and seedlings, but not in mature roots, leaves and stems. Expressed in ovules and in vegetative and floral primordia.

It is found in the nucleus. Functionally, transcription activator that recognizes and binds to the DNA consensus sequence 5'-CAC[AG]N[AT]TNCCNANG-3'. Required for the initiation and growth of ovules integumenta, and for the development of female gametophyte. Plays a critical role in the development of gynoecium marginal tissues (e.g. stigma, style and septa), and in the fusion of carpels and of medial ridges leading to ovule primordia. Also involved in organs initiation and development, including floral organs. Maintains the meristematic competence of cells and consequently sustains expression of cell cycle regulators during organogenesis, thus controlling the final size of each organ by controlling their cell number. Regulates INO autoinduction and expression pattern. As ANT promotes petal cell identity and mediates down-regulation of AG in flower whorl 2, it functions as a class A homeotic gene. The chain is AP2-like ethylene-responsive transcription factor ANT from Arabidopsis thaliana (Mouse-ear cress).